Consider the following 298-residue polypeptide: Syntaxin-4 (298 aa).

Over 1–274 (MRDRTHELRQ…NQKKARKKKV (274 aa)) the chain is Cytoplasmic. A phosphoserine mark is found at Ser-15, Ser-29, Ser-36, Ser-117, Ser-208, and Ser-248. Positions 38 to 163 (DDEFFQKVQT…ERIRRQLKIT (126 aa)) form a coiled coil. The interval 154 to 298 (ERIRRQLKIT…VIIGITITVG (145 aa)) is interaction with CENPF. The t-SNARE coiled-coil homology domain occupies 200-262 (LNEISARHSE…ERGQEHVKIA (63 aa)). Residues 275–295 (MIAICVSVTVLILAVIIGITI) traverse the membrane as a helical; Anchor for type IV membrane protein segment. The Extracellular portion of the chain corresponds to 296–298 (TVG).

It belongs to the syntaxin family. In terms of assembly, interacts with STXBP6. Component of the SNARE complex composed of STX4, SNAP23 and VAMP7 that interacts with SYT7 during lysosomal exocytosis. Found in a complex with VAMP8 and SNAP23. Detected in a complex with SNAP23 and STXBP4. Interacts with VAMP2. Interacts with SNAP23 and SNAPIN. Interacts with LLGL1. Interacts (via C-terminus) with CENPF. Interacts with DOC2B. Interacts with STXBP3; excludes interaction with DOC2B and SNAP25. Interacts with STXBP4; excludes interaction with VAMP2. Interacts with STXBP5L. As to expression, expressed in the outer and inner hair cells of the cochlea.

Its subcellular location is the cell membrane. It localises to the cell projection. The protein localises to the neuron projection. It is found in the stereocilium. Functionally, plasma membrane t-SNARE that mediates docking of transport vesicles. Necessary for the translocation of SLC2A4 from intracellular vesicles to the plasma membrane. In neurons, recruited at neurite tips to membrane domains rich in the phospholipid 1-oleoyl-2-palmitoyl-PC (OPPC) which promotes neurite tip surface expression of the dopamine transporter SLC6A3/DAT by facilitating fusion of SLC6A3-containing transport vesicles with the plasma membrane. Together with STXB3 and VAMP2, may also play a role in docking/fusion of intracellular GLUT4-containing vesicles with the cell surface in adipocytes and in docking of synaptic vesicles at presynaptic active zones. Required for normal hearing. This Mus musculus (Mouse) protein is Syntaxin-4 (Stx4).